Here is a 37-residue protein sequence, read N- to C-terminus: Photosystem I reaction center subunit IX (37 aa).

Residues 4–24 (FLSSAPVLLTAMMVFTAGLLI) form a helical membrane-spanning segment.

It belongs to the PsaJ family.

It localises to the cellular thylakoid membrane. May help in the organization of the PsaE and PsaF subunits. In Picosynechococcus sp. (strain ATCC 27264 / PCC 7002 / PR-6) (Agmenellum quadruplicatum), this protein is Photosystem I reaction center subunit IX.